The primary structure comprises 104 residues: Disrupted in renal carcinoma protein 1 (104 aa).

A disordered region spans residues 1–23 (MPEAHMQPAKLQTSLPTTDHGSK). The segment covering 10–19 (KLQTSLPTTD) has biased composition (polar residues).

In terms of tissue distribution, expressed at low steady-state level in adult placenta, testis, ovary, prostate, fetal kidney, spleen and skeletal muscle.

This chain is Disrupted in renal carcinoma protein 1 (DIRC1), found in Homo sapiens (Human).